A 270-amino-acid polypeptide reads, in one-letter code: NAD(P)H-hydrate epimerase (270 aa).

A YjeF N-terminal domain is found at 25 to 234; sequence FQQLMDLMQN…DLLAPEAIYQ (210 aa). 73–77 lines the (6S)-NADPHX pocket; the sequence is DNGGQ. 2 residues coordinate K(+): Asn74 and Asp144. Residues 148-154 and Glu177 each bind (6S)-NADPHX; that span reads GVGLYGH. Thr180 is a K(+) binding site.

It belongs to the NnrE/AIBP family. The cofactor is K(+).

It catalyses the reaction (6R)-NADHX = (6S)-NADHX. It carries out the reaction (6R)-NADPHX = (6S)-NADPHX. Functionally, catalyzes the epimerization of the S- and R-forms of NAD(P)HX, a damaged form of NAD(P)H that is a result of enzymatic or heat-dependent hydration. This is a prerequisite for the S-specific NAD(P)H-hydrate dehydratase to allow the repair of both epimers of NAD(P)HX. This chain is NAD(P)H-hydrate epimerase, found in Legionella pneumophila subsp. pneumophila (strain Philadelphia 1 / ATCC 33152 / DSM 7513).